The following is a 654-amino-acid chain: 4-hydroxy-3-methylbut-2-en-1-yl diphosphate synthase (flavodoxin) (654 aa).

[4Fe-4S] cluster-binding residues include Cys-557, Cys-560, Cys-591, and Glu-598.

This sequence belongs to the IspG family. The cofactor is [4Fe-4S] cluster.

It catalyses the reaction (2E)-4-hydroxy-3-methylbut-2-enyl diphosphate + oxidized [flavodoxin] + H2O + 2 H(+) = 2-C-methyl-D-erythritol 2,4-cyclic diphosphate + reduced [flavodoxin]. Its pathway is isoprenoid biosynthesis; isopentenyl diphosphate biosynthesis via DXP pathway; isopentenyl diphosphate from 1-deoxy-D-xylulose 5-phosphate: step 5/6. Converts 2C-methyl-D-erythritol 2,4-cyclodiphosphate (ME-2,4cPP) into 1-hydroxy-2-methyl-2-(E)-butenyl 4-diphosphate. In Protochlamydia amoebophila (strain UWE25), this protein is 4-hydroxy-3-methylbut-2-en-1-yl diphosphate synthase (flavodoxin).